The chain runs to 309 residues: Methionyl-tRNA formyltransferase (309 aa).

112–115 provides a ligand contact to (6S)-5,6,7,8-tetrahydrofolate; it reads SLLP.

It belongs to the Fmt family.

It carries out the reaction L-methionyl-tRNA(fMet) + (6R)-10-formyltetrahydrofolate = N-formyl-L-methionyl-tRNA(fMet) + (6S)-5,6,7,8-tetrahydrofolate + H(+). Functionally, attaches a formyl group to the free amino group of methionyl-tRNA(fMet). The formyl group appears to play a dual role in the initiator identity of N-formylmethionyl-tRNA by promoting its recognition by IF2 and preventing the misappropriation of this tRNA by the elongation apparatus. The protein is Methionyl-tRNA formyltransferase of Bartonella quintana (strain Toulouse) (Rochalimaea quintana).